A 125-amino-acid polypeptide reads, in one-letter code: Glycoprotein hormones alpha chain (125 aa).

A signal peptide spans 1–30; it reads MVSAVTTMGCMKAAGVSLLLLYFLLNAADS. 5 disulfide bridges follow: C41–C64, C44–C93, C61–C114, C65–C116, and C92–C119. N85 and N110 each carry an N-linked (GlcNAc...) asparagine glycan.

It belongs to the glycoprotein hormones subunit alpha family. In terms of assembly, heterodimer. Glycoprotein hormones are heterodimers composed of a common alpha chain described here and a unique beta chain which confers their biological specificity to the different hormones.

It localises to the secreted. In terms of biological role, shared alpha chain of heterodimeric glycoprotein hormones. These hormones bind specific receptors on target cells that in turn activate downstream signaling pathways. Involved in gametogenesis and steroidogenesis. The chain is Glycoprotein hormones alpha chain (cga) from Fundulus heteroclitus (Killifish).